Reading from the N-terminus, the 240-residue chain is MATKIFSLLMLLALSACVANATIFPQCSQAPIASLLPPYLPSMIASVCENPALQPYRLQQAIAASNIPLSPLLFQQSPALSLVQSLVQTIRAQQLQQLVLPLINQVALANLSPYSQQQQFLPFNQLSTLNPAAYLQQQLLPFSQLATAYSQQQQLLPFNQLAALNPAAYLQQQILLPFSQLAAANRASFLTQQQLLPFYQQFAANPATLLQLQQLLPFVQLALTDPAASYQQHIIGGALF.

Positions methionine 1 to alanine 21 are cleaved as a signal peptide.

This sequence belongs to the zein family.

Its function is as follows. Zeins are major seed storage proteins. In Zea mays (Maize), this protein is Zein-alpha 19C1.